We begin with the raw amino-acid sequence, 353 residues long: Protein RecA (353 aa).

An ATP-binding site is contributed by 65-72 (GPESSGKT).

It belongs to the RecA family.

It is found in the cytoplasm. Functionally, can catalyze the hydrolysis of ATP in the presence of single-stranded DNA, the ATP-dependent uptake of single-stranded DNA by duplex DNA, and the ATP-dependent hybridization of homologous single-stranded DNAs. It interacts with LexA causing its activation and leading to its autocatalytic cleavage. The polypeptide is Protein RecA (Aeromonas salmonicida (strain A449)).